Reading from the N-terminus, the 132-residue chain is Small ribosomal subunit protein uS8 (132 aa).

The protein belongs to the universal ribosomal protein uS8 family. Part of the 30S ribosomal subunit. Contacts proteins S5 and S12.

In terms of biological role, one of the primary rRNA binding proteins, it binds directly to 16S rRNA central domain where it helps coordinate assembly of the platform of the 30S subunit. The polypeptide is Small ribosomal subunit protein uS8 (Chelativorans sp. (strain BNC1)).